The following is a 403-amino-acid chain: Argininosuccinate synthase (403 aa).

9–17 (AYSGGLDTS) contacts ATP. Tyr-86 contributes to the L-citrulline binding site. Residue Gly-116 participates in ATP binding. L-aspartate contacts are provided by Thr-118, Asn-122, and Asp-123. Asn-122 is an L-citrulline binding site. The L-citrulline site is built by Arg-126, Ser-174, Ser-183, Glu-259, and Tyr-271.

Belongs to the argininosuccinate synthase family. Type 1 subfamily. Homotetramer.

Its subcellular location is the cytoplasm. It carries out the reaction L-citrulline + L-aspartate + ATP = 2-(N(omega)-L-arginino)succinate + AMP + diphosphate + H(+). It participates in amino-acid biosynthesis; L-arginine biosynthesis; L-arginine from L-ornithine and carbamoyl phosphate: step 2/3. This Shouchella clausii (strain KSM-K16) (Alkalihalobacillus clausii) protein is Argininosuccinate synthase.